The primary structure comprises 254 residues: Cell division protein ZapD (254 aa).

The protein belongs to the ZapD family. As to quaternary structure, interacts with FtsZ.

The protein resides in the cytoplasm. Functionally, cell division factor that enhances FtsZ-ring assembly. Directly interacts with FtsZ and promotes bundling of FtsZ protofilaments, with a reduction in FtsZ GTPase activity. This chain is Cell division protein ZapD, found in Idiomarina loihiensis (strain ATCC BAA-735 / DSM 15497 / L2-TR).